A 207-amino-acid polypeptide reads, in one-letter code: Infectivity protein P11 (207 aa).

A helical membrane pass occupies residues 13-28 (WWIVAAIGGLAAFLLL). Positions 64-95 (AALQANTQLSAQNAQLQAQMDASRLQLETQLN) form a coiled coil.

The protein resides in the virion membrane. Functionally, component of the phage ejection machinery. Pilot protein for the formation of the tube that conducts the genome into the target cell. Probably involved in penetration of the bacterial outer membrane and for making the peptidoglycan layer accessible to the viral transglycosylase. Essential for viral infectivity. The protein is Infectivity protein P11 (XI) of Enterobacteria phage PRD1 (Bacteriophage PRD1).